Here is a 534-residue protein sequence, read N- to C-terminus: High-affinity nicotinic acid transporter (534 aa).

At M1 to N130 the chain is on the extracellular side. A disordered region spans residues S21–E56. S27 is modified (phosphoserine). A helical transmembrane segment spans residues T131–L151. Position 152 (K152) is a topological domain, cytoplasmic. The helical transmembrane segment at I153–G173 threads the bilayer. Residues T174–R187 are Extracellular-facing. The helical transmembrane segment at L188–C208 threads the bilayer. The Cytoplasmic portion of the chain corresponds to Y209 to R217. The chain crosses the membrane as a helical span at residues F218 to G238. Topologically, residues C239 to Q250 are extracellular. A helical membrane pass occupies residues Y251–L271. Residues S272–A323 lie on the Cytoplasmic side of the membrane. Residue K283 forms a Glycyl lysine isopeptide (Lys-Gly) (interchain with G-Cter in ubiquitin) linkage. Residues V324 to I344 traverse the membrane as a helical segment. Residues T345–Q355 are Extracellular-facing. Residues L356–S376 form a helical membrane-spanning segment. Over D377–P384 the chain is Cytoplasmic. Residues F385–V405 traverse the membrane as a helical segment. Residues H406–Y410 lie on the Extracellular side of the membrane. A helical transmembrane segment spans residues F411–L431. The Cytoplasmic portion of the chain corresponds to S432 to A444. A helical transmembrane segment spans residues L445 to A465. Topologically, residues K466 to G474 are extracellular. A helical membrane pass occupies residues L475–L495. Topologically, residues Y496–Y534 are cytoplasmic.

This sequence belongs to the major facilitator superfamily. Allantoate permease family.

It localises to the membrane. Its function is as follows. Involved in the uptake of nicotinic acid. In Saccharomyces cerevisiae (strain ATCC 204508 / S288c) (Baker's yeast), this protein is High-affinity nicotinic acid transporter (TNA1).